Consider the following 368-residue polypeptide: 3-isopropylmalate dehydrogenase (368 aa).

79–92 (GPRYEGLPWDLRPE) is an NAD(+) binding site. Substrate-binding residues include R99, R109, R138, and D228. Residues D228, D252, and D256 each coordinate Mg(2+). An NAD(+)-binding site is contributed by 292-304 (GSAPDIAGQDRAN).

Belongs to the isocitrate and isopropylmalate dehydrogenases family. LeuB type 1 subfamily. In terms of assembly, homodimer. Mg(2+) is required as a cofactor. It depends on Mn(2+) as a cofactor.

It localises to the cytoplasm. It catalyses the reaction (2R,3S)-3-isopropylmalate + NAD(+) = 4-methyl-2-oxopentanoate + CO2 + NADH. It functions in the pathway amino-acid biosynthesis; L-leucine biosynthesis; L-leucine from 3-methyl-2-oxobutanoate: step 3/4. Catalyzes the oxidation of 3-carboxy-2-hydroxy-4-methylpentanoate (3-isopropylmalate) to 3-carboxy-4-methyl-2-oxopentanoate. The product decarboxylates to 4-methyl-2 oxopentanoate. The polypeptide is 3-isopropylmalate dehydrogenase (Symbiobacterium thermophilum (strain DSM 24528 / JCM 14929 / IAM 14863 / T)).